We begin with the raw amino-acid sequence, 102 residues long: Small ribosomal subunit protein uS10 (102 aa).

The segment at 34–58 (LSGPVPLPTKTLEIPARKSPDGEGT) is disordered.

This sequence belongs to the universal ribosomal protein uS10 family. In terms of assembly, part of the 30S ribosomal subunit.

Involved in the binding of tRNA to the ribosomes. The chain is Small ribosomal subunit protein uS10 from Natronomonas pharaonis (strain ATCC 35678 / DSM 2160 / CIP 103997 / JCM 8858 / NBRC 14720 / NCIMB 2260 / Gabara) (Halobacterium pharaonis).